We begin with the raw amino-acid sequence, 167 residues long: N-alpha-acetyltransferase (167 aa).

The N-acetyltransferase domain occupies 12–167 (YRIRNARLTD…EDAYLMAAPL (156 aa)). Residue Tyr37 participates in substrate binding. Position 88 (His88) interacts with Zn(2+). Residues 92–94 (IAV) and 100–105 (RLGIGT) each bind acetyl-CoA. Glu127 is a binding site for Zn(2+). Residues Asn132 and 139–141 (YKK) contribute to the acetyl-CoA site. Tyr154 is a substrate binding site.

Belongs to the acetyltransferase family. ARD1 subfamily. Homodimer.

The protein resides in the cytoplasm. It catalyses the reaction N-terminal L-alanyl-[protein] + acetyl-CoA = N-terminal N(alpha)-acetyl-L-alanyl-[protein] + CoA + H(+). The enzyme catalyses N-terminal L-seryl-[protein] + acetyl-CoA = N-terminal N(alpha)-acetyl-L-seryl-[protein] + CoA + H(+). The catalysed reaction is N-terminal L-methionyl-L-leucyl-[protein] + acetyl-CoA = N-terminal N(alpha)-acetyl-L-methionyl-L-leucyl-[protein] + CoA + H(+). It carries out the reaction N-terminal L-methionyl-L-glutamyl-[protein] + acetyl-CoA = N-terminal N(alpha)-acetyl-L-methionyl-L-glutamyl-[protein] + CoA + H(+). Its function is as follows. Displays alpha (N-terminal) acetyltransferase activity. Catalyzes the covalent attachment of an acetyl moiety from acetyl-CoA to the free alpha-amino group at the N-terminus of a protein. This chain is N-alpha-acetyltransferase, found in Sulfurisphaera tokodaii (strain DSM 16993 / JCM 10545 / NBRC 100140 / 7) (Sulfolobus tokodaii).